The following is a 769-amino-acid chain: Serine protease HtrA-like (769 aa).

Basic residues predominate over residues 1–20 (MDIGKKHVIPKSQYRRKRRE). Residues 1–390 (MDIGKKHVIP…ATSKLNKGRA (390 aa)) form a disordered region. 2 stretches are compositionally biased toward basic and acidic residues: residues 21-64 (FFHN…ERFK) and 71-108 (LEQRNRDVNENKAEESKSNQDSKSAYNRDHYLTDDVSK). Positions 126–137 (YEQNSEATLSTK) are enriched in polar residues. A compositionally biased stretch (basic and acidic residues) spans 138 to 186 (STDKVESTEMRKLSSDKNKVGHEEQHVLSKPSEHDKETRIDSESSRTDS). Residues 247-262 (QQSQNEQTKTYTYGDS) show a composition bias toward polar residues. Composition is skewed to basic and acidic residues over residues 264-296 (QNDKSNHENDLSHHIPSISDDKDNVMRENHIVD) and 310-330 (KTDDDRKLDEKIHVEDKHKQN). Positions 331-347 (ADSSETVGYQSQSTASH) are enriched in polar residues. Over residues 348 to 364 (RSTEKRNISINDHDKLN) the composition is skewed to basic and acidic residues. Over residues 365–390 (GQKTNTKTSANNNQKKATSKLNKGRA) the composition is skewed to polar residues. Residues 410-430 (LVILMGIIILIVILNAIFNNV) traverse the membrane as a helical segment. Active-site charge relay system residues include histidine 504, aspartate 534, and serine 619. Residues 680 to 733 (IASLNSFERQAVKLPGKVKNGVVVDQVDNNGLADQSGLKKGDVITELDGKLLED) form the PDZ domain.

The protein belongs to the peptidase S1C family.

Its subcellular location is the cell membrane. The polypeptide is Serine protease HtrA-like (Staphylococcus aureus (strain COL)).